The chain runs to 388 residues: MTLKVLVVDDSGFFRRRLCEILSSISDVDVVGTASNGREGVEMALKLKPDVITMDYEMPVMDGITAVKEIMRVQPTPVLMFSSLTYEGARVTFDALEAGAVDFLPKSFEAMSGDASKIKRLLHDRIKEVSRAKYRMSGASAPASVPQPAKPAAPIPVREPPKPAAPVTRPAEPRAKAPPAKPEPKPEVKAAKSRRTPRQDYKVVLIGTSTGGPVALQKILTRLPGAFPAPLVLVQHMPASFTPAFAERLNRLSQLSVKQAENGEILKPGWAYIAPGGKQTLIERVGAQARVKILDGDERLHYKPCVDVTFGSCAKMFPGKVLGVILTGMGADGREGCRMLKETGSVVWSQDEATSVIYGMPMAVATAGLSDEVLALDEFAPRLIDGVG.

The Response regulatory domain occupies 4 to 121; the sequence is KVLVVDDSGF…SGDASKIKRL (118 aa). D55 carries the 4-aspartylphosphate modification. A disordered region spans residues 137–196; it reads SGASAPASVPQPAKPAAPIPVREPPKPAAPVTRPAEPRAKAPPAKPEPKPEVKAAKSRRT. Residues 148 to 164 are compositionally biased toward pro residues; sequence PAKPAAPIPVREPPKPA. A CheB-type methylesterase domain is found at 197–388; it reads PRQDYKVVLI…FAPRLIDGVG (192 aa). Residues S209, H236, and D332 contribute to the active site.

It belongs to the CheB family. Post-translationally, phosphorylated by CheA. Phosphorylation of the N-terminal regulatory domain activates the methylesterase activity.

It localises to the cytoplasm. It carries out the reaction [protein]-L-glutamate 5-O-methyl ester + H2O = L-glutamyl-[protein] + methanol + H(+). It catalyses the reaction L-glutaminyl-[protein] + H2O = L-glutamyl-[protein] + NH4(+). In terms of biological role, involved in chemotaxis. Part of a chemotaxis signal transduction system that modulates chemotaxis in response to various stimuli. Catalyzes the demethylation of specific methylglutamate residues introduced into the chemoreceptors (methyl-accepting chemotaxis proteins or MCP) by CheR. Also mediates the irreversible deamidation of specific glutamine residues to glutamic acid. This chain is Protein-glutamate methylesterase/protein-glutamine glutaminase 4, found in Hahella chejuensis (strain KCTC 2396).